A 635-amino-acid polypeptide reads, in one-letter code: Extracellular metalloproteinase 1 (635 aa).

Residues 1–19 form the signal peptide; sequence MHGLLLAAGLLSLPLHVLA. The propeptide occupies 20 to 246; it reads HPQPSTSTSL…VHNVVDYVAH (227 aa). The N-linked (GlcNAc...) asparagine glycan is linked to Asn-287. Zn(2+) is bound at residue His-430. Residue Glu-431 is part of the active site. His-434 lines the Zn(2+) pocket. 3 N-linked (GlcNAc...) asparagine glycosylation sites follow: Asn-475, Asn-594, and Asn-623.

It belongs to the peptidase M36 family. Requires Zn(2+) as cofactor.

The protein resides in the secreted. In terms of biological role, secreted metalloproteinase probably acting as a virulence factor. In Trichophyton tonsurans (Scalp ringworm fungus), this protein is Extracellular metalloproteinase 1 (MEP1).